The primary structure comprises 132 residues: uncharacterized protein (132 aa).

A signal peptide spans 1 to 24 (MVTIGSSSLVLFLFFVVFVQITYT). The next 2 helical transmembrane spans lie at 75–95 (YVNV…ILGI) and 112–132 (ESAI…VYIH).

It localises to the membrane. This is an uncharacterized protein from Saccharomyces cerevisiae (strain ATCC 204508 / S288c) (Baker's yeast).